A 115-amino-acid chain; its full sequence is Nucleoid-associated protein LA_4332 (115 aa).

The protein belongs to the YbaB/EbfC family. In terms of assembly, homodimer.

The protein localises to the cytoplasm. It localises to the nucleoid. Functionally, binds to DNA and alters its conformation. May be involved in regulation of gene expression, nucleoid organization and DNA protection. The protein is Nucleoid-associated protein LA_4332 of Leptospira interrogans serogroup Icterohaemorrhagiae serovar Lai (strain 56601).